The following is a 207-amino-acid chain: Outer-membrane lipoprotein LolB (207 aa).

The N-terminal stretch at Met1–Ala21 is a signal peptide. The N-palmitoyl cysteine moiety is linked to residue Cys22. The S-diacylglycerol cysteine moiety is linked to residue Cys22.

This sequence belongs to the LolB family. Monomer.

The protein resides in the cell outer membrane. Its function is as follows. Plays a critical role in the incorporation of lipoproteins in the outer membrane after they are released by the LolA protein. The protein is Outer-membrane lipoprotein LolB of Salmonella arizonae (strain ATCC BAA-731 / CDC346-86 / RSK2980).